The chain runs to 172 residues: Ribosome maturation factor RimM (172 aa).

In terms of domain architecture, PRC barrel spans 98–171; it reads PGEYYYHQIV…KVIVELMEGL (74 aa).

Belongs to the RimM family. Binds ribosomal protein uS19.

It is found in the cytoplasm. Its function is as follows. An accessory protein needed during the final step in the assembly of 30S ribosomal subunit, possibly for assembly of the head region. Essential for efficient processing of 16S rRNA. May be needed both before and after RbfA during the maturation of 16S rRNA. It has affinity for free ribosomal 30S subunits but not for 70S ribosomes. In Levilactobacillus brevis (strain ATCC 367 / BCRC 12310 / CIP 105137 / JCM 1170 / LMG 11437 / NCIMB 947 / NCTC 947) (Lactobacillus brevis), this protein is Ribosome maturation factor RimM.